Reading from the N-terminus, the 507-residue chain is Histidine ammonia-lyase (507 aa).

The 5-imidazolinone (Ala-Gly) cross-link spans 141–143 (ASG). Position 142 is a 2,3-didehydroalanine (Ser) (Ser142).

It belongs to the PAL/histidase family. Contains an active site 4-methylidene-imidazol-5-one (MIO), which is formed autocatalytically by cyclization and dehydration of residues Ala-Ser-Gly.

Its subcellular location is the cytoplasm. It carries out the reaction L-histidine = trans-urocanate + NH4(+). The protein operates within amino-acid degradation; L-histidine degradation into L-glutamate; N-formimidoyl-L-glutamate from L-histidine: step 1/3. This Burkholderia cenocepacia (strain HI2424) protein is Histidine ammonia-lyase.